The primary structure comprises 545 residues: Carboxypeptidase N subunit 2 (545 aa).

An N-terminal signal peptide occupies residues 1–21; it reads MLPGAWLLWTSLLLLARPAQP. The LRRNT domain maps to 22-49; the sequence is CPMGCDCFVQEVFCSDEELATVPLDIPP. N-linked (GlcNAc...) asparagine glycosylation is found at N74, N111, and N119. LRR repeat units follow at residues 98-119, 122-143, 146-167, 170-191, 194-215, 218-239, 242-263, 266-287, 290-311, 314-335, 338-359, and 362-383; these read RLEDLEVTGSSFLNLSTNIFSN, SLGKLTLNFNMLEALPEGLFQH, ALESLHLQGNQLQALPRRLFQP, HLKTLNLAQNLLAQLPEELFHP, SLQTLKLSNNALSGLPQGVFGK, SLQELFLDSNNISELPPQVFSQ, CLERLWLQRNAITHLPLSIFAS, NLTFLSLQWNMLRVLPAGLFAH, CLVGLSLTHNQLETVAEGTFAH, NLRSLMLSYNAITHLPAGIFRD, ELVKLYLGSNNLTALHPALFQN, and KLELLSLSKNQLTTLPEGIFDT. Residue N228 is glycosylated (N-linked (GlcNAc...) asparagine). Residue N266 is glycosylated (N-linked (GlcNAc...) asparagine). 2 N-linked (GlcNAc...) asparagine glycosylation sites follow: N348 and N359. The LRRCT domain maps to 395–447; that stretch reads NPWQCDCHLAYLFNWLQQYTDRLLNIQTYCAGPAYLKGQVVPALNEKQLVCPV. N518 carries N-linked (GlcNAc...) asparagine glycosylation.

In terms of assembly, tetramer of two catalytic chains and two glycosylated inactive chains. Whether or not any Cys residues participate in intrachain bonds is unknown, but they do not form interchain disulfide bonds with the 50 kDa catalytic subunit.

The protein resides in the secreted. Its function is as follows. The 83 kDa subunit binds and stabilizes the catalytic subunit at 37 degrees Celsius and keeps it in circulation. Under some circumstances it may be an allosteric modifier of the catalytic subunit. The chain is Carboxypeptidase N subunit 2 (CPN2) from Homo sapiens (Human).